A 113-amino-acid chain; its full sequence is UPF0060 membrane protein CV_3485 (113 aa).

The next 4 helical transmembrane spans lie at 12–32 (GLFV…WLVL), 37–57 (SLWL…LLTL), 67–87 (AAYG…VDGV), and 91–111 (RWDA…MLAP).

The protein belongs to the UPF0060 family.

It is found in the cell inner membrane. The polypeptide is UPF0060 membrane protein CV_3485 (Chromobacterium violaceum (strain ATCC 12472 / DSM 30191 / JCM 1249 / CCUG 213 / NBRC 12614 / NCIMB 9131 / NCTC 9757 / MK)).